Reading from the N-terminus, the 214-residue chain is 3-isopropylmalate dehydratase small subunit (214 aa).

Belongs to the LeuD family. LeuD type 1 subfamily. As to quaternary structure, heterodimer of LeuC and LeuD.

It catalyses the reaction (2R,3S)-3-isopropylmalate = (2S)-2-isopropylmalate. It participates in amino-acid biosynthesis; L-leucine biosynthesis; L-leucine from 3-methyl-2-oxobutanoate: step 2/4. Functionally, catalyzes the isomerization between 2-isopropylmalate and 3-isopropylmalate, via the formation of 2-isopropylmaleate. The polypeptide is 3-isopropylmalate dehydratase small subunit (Methylobacillus flagellatus (strain ATCC 51484 / DSM 6875 / VKM B-1610 / KT)).